The following is a 585-amino-acid chain: Protein NRT1/ PTR FAMILY 4.6 (585 aa).

Helical transmembrane passes span 28 to 48 (GMLA…AYLA), 75 to 95 (FMGT…AFFS), 96 to 116 (TFQI…ILTI), 142 to 162 (AMLF…KGSL), 184 to 204 (FFNY…TFVV), 211 to 231 (GWEW…LIFL), 343 to 363 (IVLK…CLAQ), 391 to 411 (IFPV…IIPF), 428 to 448 (IGVG…VEIK), 465 to 485 (LPVT…ADLF), 508 to 528 (SLSW…VSIV), and 554 to 574 (FYWL…FWAM).

Belongs to the major facilitator superfamily. Proton-dependent oligopeptide transporter (POT/PTR) (TC 2.A.17) family. Expressed in root hairs and in epidermis of both root tips and mature regions of roots. Detected in shoots, stems, flowers, siliques and imbibed seeds. Expressed in vascular tissues in cotyledons, trus leaves, hypocotyls, roots and inflorescence stems.

The protein resides in the cell membrane. Low-affinity proton-dependent nitrate transporter. Involved in constitutive nitrate uptake. Not involved in histidine or dipeptides transport. Involved in (+)-abscisic acid (ABA) transport, but not in gibberellin, indole-3-acetic acid or jasmonic acid import. Mediates cellular ABA uptake. Nitrate does not compete with abscisic acid as a substrate of NPF4.6. This chain is Protein NRT1/ PTR FAMILY 4.6 (NPF4.6), found in Arabidopsis thaliana (Mouse-ear cress).